Consider the following 199-residue polypeptide: Tegument protein UL14 homolog (199 aa).

Positions 176-191 (TDMNQMQPQPISKNEN) are enriched in polar residues. A disordered region spans residues 176–199 (TDMNQMQPQPISKNENPPTPHTDV).

The protein belongs to the alphaherpesvirinae HHV-1 UL14 protein family.

Its subcellular location is the virion tegument. It localises to the host cytoplasm. It is found in the host nucleus. Functionally, contributes to the nuclear transport of the viral transcriptional activator VP16 homolog during the early phase of infection. Therefore, participates indirectly in the regulation of the immediate-early gene expression. Additionally, seems to be important for efficient nuclear targeting of capsids. The polypeptide is Tegument protein UL14 homolog (Varicella-zoster virus (strain Dumas) (HHV-3)).